A 72-amino-acid polypeptide reads, in one-letter code: MAKEDVIEMQGTVLDTLPNTMFRVELENGHVVVAHISGKMRKNYIRILTGDKVTVEMTPYDLSKGRIVFRAR.

The S1-like domain occupies M1 to R72.

This sequence belongs to the IF-1 family. Component of the 30S ribosomal translation pre-initiation complex which assembles on the 30S ribosome in the order IF-2 and IF-3, IF-1 and N-formylmethionyl-tRNA(fMet); mRNA recruitment can occur at any time during PIC assembly.

It localises to the cytoplasm. In terms of biological role, one of the essential components for the initiation of protein synthesis. Stabilizes the binding of IF-2 and IF-3 on the 30S subunit to which N-formylmethionyl-tRNA(fMet) subsequently binds. Helps modulate mRNA selection, yielding the 30S pre-initiation complex (PIC). Upon addition of the 50S ribosomal subunit IF-1, IF-2 and IF-3 are released leaving the mature 70S translation initiation complex. The protein is Translation initiation factor IF-1 of Pseudoalteromonas translucida (strain TAC 125).